Consider the following 253-residue polypeptide: Carboxy-S-adenosyl-L-methionine synthase (253 aa).

S-adenosyl-L-methionine contacts are provided by residues Y49, 74 to 76, 98 to 99, and N141; these read GCS and DN.

It belongs to the class I-like SAM-binding methyltransferase superfamily. Cx-SAM synthase family.

It carries out the reaction prephenate + S-adenosyl-L-methionine = carboxy-S-adenosyl-L-methionine + 3-phenylpyruvate + H2O. Its function is as follows. Catalyzes the conversion of S-adenosyl-L-methionine (SAM) to carboxy-S-adenosyl-L-methionine (Cx-SAM). In Trichodesmium erythraeum (strain IMS101), this protein is Carboxy-S-adenosyl-L-methionine synthase.